An 896-amino-acid chain; its full sequence is DNA mismatch repair protein MutS (896 aa).

618-625 (GPNMSGKS) contacts ATP. Positions 805-825 (GKESTKTGKGENKNISHKTES) are enriched in basic and acidic residues. Residues 805-826 (GKESTKTGKGENKNISHKTESD) are disordered.

It belongs to the DNA mismatch repair MutS family.

Functionally, this protein is involved in the repair of mismatches in DNA. It is possible that it carries out the mismatch recognition step. This protein has a weak ATPase activity. The protein is DNA mismatch repair protein MutS of Halothermothrix orenii (strain H 168 / OCM 544 / DSM 9562).